The chain runs to 280 residues: 4-diphosphocytidyl-2-C-methyl-D-erythritol kinase (280 aa).

Lys-8 is a catalytic residue. 91 to 101 contacts ATP; it reads PVAAGLAGGST. Residue Asp-133 is part of the active site.

It belongs to the GHMP kinase family. IspE subfamily.

The catalysed reaction is 4-CDP-2-C-methyl-D-erythritol + ATP = 4-CDP-2-C-methyl-D-erythritol 2-phosphate + ADP + H(+). It participates in isoprenoid biosynthesis; isopentenyl diphosphate biosynthesis via DXP pathway; isopentenyl diphosphate from 1-deoxy-D-xylulose 5-phosphate: step 3/6. Its function is as follows. Catalyzes the phosphorylation of the position 2 hydroxy group of 4-diphosphocytidyl-2C-methyl-D-erythritol. This chain is 4-diphosphocytidyl-2-C-methyl-D-erythritol kinase, found in Clostridium botulinum (strain 657 / Type Ba4).